The following is a 257-amino-acid chain: METSKPGCGLALDNDKQKPWLGLMIGNSRLHWAYCSGNAPLQTWVTDYNPKSAQLPVLLGKVPLMLASVVPEQTEVWRVYQPKILTLKNLPLVNLYPSFGIDRALAGLGTGLTYGFPCLVVDGGTALTITGFDQDKKLVGGAILPGLGLQLATLGDRLAALPKLEMDQLTELPDRWALDTPSAIFSGVVYGVLGALQSYLQDWQKLFPGAAMVITGGDGKILHGFLKEHSPNLSVAWDDNLIFLGMAAIHHGDRPIC.

24–31 (MIGNSRLH) is a binding site for ATP. Substrate-binding positions include Tyr96 and 100–103 (GIDR). Asp102 acts as the Proton acceptor in catalysis. Asp122 serves as a coordination point for K(+). Thr125 lines the ATP pocket. Thr180 contacts substrate.

Belongs to the type III pantothenate kinase family. As to quaternary structure, homodimer. NH4(+) serves as cofactor. Requires K(+) as cofactor.

The protein resides in the cytoplasm. The enzyme catalyses (R)-pantothenate + ATP = (R)-4'-phosphopantothenate + ADP + H(+). It participates in cofactor biosynthesis; coenzyme A biosynthesis; CoA from (R)-pantothenate: step 1/5. Catalyzes the phosphorylation of pantothenate (Pan), the first step in CoA biosynthesis. The protein is Type III pantothenate kinase of Synechocystis sp. (strain ATCC 27184 / PCC 6803 / Kazusa).